Reading from the N-terminus, the 736-residue chain is Polyphosphate kinase (736 aa).

Asn91 is a binding site for ATP. Positions 421 and 451 each coordinate Mg(2+). Catalysis depends on His481, which acts as the Phosphohistidine intermediate. ATP-binding residues include Tyr514, Arg610, and His638.

It belongs to the polyphosphate kinase 1 (PPK1) family. Mg(2+) serves as cofactor. In terms of processing, an intermediate of this reaction is the autophosphorylated ppk in which a phosphate is covalently linked to a histidine residue through a N-P bond.

It carries out the reaction [phosphate](n) + ATP = [phosphate](n+1) + ADP. Functionally, catalyzes the reversible transfer of the terminal phosphate of ATP to form a long-chain polyphosphate (polyP). This Pseudomonas syringae pv. tomato (strain ATCC BAA-871 / DC3000) protein is Polyphosphate kinase.